A 350-amino-acid chain; its full sequence is uncharacterized protein (350 aa).

One can recognise an Integrase catalytic domain in the interval Asn164–Val327.

This is an uncharacterized protein from Sinorhizobium fredii (strain NBRC 101917 / NGR234).